A 353-amino-acid polypeptide reads, in one-letter code: Very-long-chain 3-oxoacyl-CoA reductase (353 aa).

A helical transmembrane segment spans residues 33–53 (AAWALIAAGGFFVISRALLFG). NADP(+) contacts are provided by Val78, Asp133, Asp141, Asn160, Tyr227, Lys231, Ile260, and Ser262. Tyr227 (proton donor) is an active-site residue. The Lowers pKa of active site Tyr role is filled by Lys231.

This sequence belongs to the short-chain dehydrogenases/reductases (SDR) family.

It localises to the endoplasmic reticulum membrane. It carries out the reaction a very-long-chain (3R)-3-hydroxyacyl-CoA + NADP(+) = a very-long-chain 3-oxoacyl-CoA + NADPH + H(+). It functions in the pathway lipid metabolism; fatty acid biosynthesis. Functionally, component of the microsomal membrane bound fatty acid elongation system, which produces the 26-carbon very long-chain fatty acids (VLCFA) from palmitate. Catalyzes the reduction of the 3-ketoacyl-CoA intermediate that is formed in each cycle of fatty acid elongation. VLCFAs serve as precursors for ceramide and sphingolipids. The protein is Very-long-chain 3-oxoacyl-CoA reductase of Aspergillus terreus (strain NIH 2624 / FGSC A1156).